Consider the following 241-residue polypeptide: High mobility group B protein 7 (241 aa).

2 stretches are compositionally biased toward polar residues: residues 1-11 and 20-29; these read MAGPSTTSNAP and ETSSNTSTTL. Disordered stretches follow at residues 1-30, 75-116, and 174-241; these read MAGP…TTLR, TQAE…NKPK, and EYNK…LDDY. Positions 77–90 are enriched in basic and acidic residues; that stretch reads AEAKKKPAEKKKTT. The HMG box DNA-binding region spans 115-183; it reads PKRPLTAFFI…EYNKSLESND (69 aa). Acidic residues-rich tracts occupy residues 182-221 and 229-241; these read NDAD…ENTD and GKEE…LDDY.

It belongs to the HMGB family. In terms of processing, phosphorylated. In terms of tissue distribution, expressed at low levels in lateral roots, root tips, cotyledons, leaves and flowers (including pedicels, but excluding styles).

It is found in the nucleus. Binds preferentially double-stranded supercoiled DNA. Required for karyogamy during female gametophyte development, when the two polar nuclei fuse to form the diploid central cell nucleus. In Arabidopsis thaliana (Mouse-ear cress), this protein is High mobility group B protein 7 (HMGB7).